The following is a 513-amino-acid chain: Lysine--tRNA ligase (513 aa).

Mg(2+) is bound by residues Glu-423 and Glu-430.

Belongs to the class-II aminoacyl-tRNA synthetase family. As to quaternary structure, homodimer. The cofactor is Mg(2+).

Its subcellular location is the cytoplasm. It catalyses the reaction tRNA(Lys) + L-lysine + ATP = L-lysyl-tRNA(Lys) + AMP + diphosphate. In Anaeromyxobacter dehalogenans (strain 2CP-C), this protein is Lysine--tRNA ligase.